The primary structure comprises 445 residues: Phosphoglucosamine mutase 1 (445 aa).

S102 acts as the Phosphoserine intermediate in catalysis. Mg(2+) is bound by residues S102, D241, D243, and D245. S102 is modified (phosphoserine).

Belongs to the phosphohexose mutase family. It depends on Mg(2+) as a cofactor. Activated by phosphorylation.

The enzyme catalyses alpha-D-glucosamine 1-phosphate = D-glucosamine 6-phosphate. Its function is as follows. Catalyzes the conversion of glucosamine-6-phosphate to glucosamine-1-phosphate. This is Phosphoglucosamine mutase 1 from Shewanella frigidimarina (strain NCIMB 400).